The chain runs to 164 residues: Cytochrome c oxidase subunit 4, mitochondrial (164 aa).

A mitochondrion-targeting transit peptide spans 1–33 (MFMNSMLRVSRQRAAVRSTVSLYRGFVSASIRR). Cys120, His128, Cys143, and Cys146 together coordinate Zn(2+).

The protein belongs to the cytochrome c oxidase subunit 5B family. In terms of assembly, component of the cytochrome c oxidase (complex IV, CIV), a multisubunit enzyme composed of a catalytic core of 3 subunits and several supernumerary subunits. The complex exists as a monomer or a dimer and forms supercomplexes (SCs) in the inner mitochondrial membrane with ubiquinol-cytochrome c oxidoreductase (cytochrome b-c1 complex, complex III, CIII).

It is found in the mitochondrion inner membrane. It participates in energy metabolism; oxidative phosphorylation. Functionally, component of the cytochrome c oxidase, the last enzyme in the mitochondrial electron transport chain which drives oxidative phosphorylation. The respiratory chain contains 3 multisubunit complexes succinate dehydrogenase (complex II, CII), ubiquinol-cytochrome c oxidoreductase (cytochrome b-c1 complex, complex III, CIII) and cytochrome c oxidase (complex IV, CIV), that cooperate to transfer electrons derived from NADH and succinate to molecular oxygen, creating an electrochemical gradient over the inner membrane that drives transmembrane transport and the ATP synthase. Cytochrome c oxidase is the component of the respiratory chain that catalyzes the reduction of oxygen to water. Electrons originating from reduced cytochrome c in the intermembrane space (IMS) are transferred via the dinuclear copper A center (CU(A)) of subunit 2 and heme A of subunit 1 to the active site in subunit 1, a binuclear center (BNC) formed by heme A3 and copper B (CU(B)). The BNC reduces molecular oxygen to 2 water molecules using 4 electrons from cytochrome c in the IMS and 4 protons from the mitochondrial matrix. This is Cytochrome c oxidase subunit 4, mitochondrial (cox4) from Schizosaccharomyces pombe (strain 972 / ATCC 24843) (Fission yeast).